We begin with the raw amino-acid sequence, 369 residues long: 4-hydroxy-3-methylbut-2-en-1-yl diphosphate synthase (flavodoxin) (369 aa).

The [4Fe-4S] cluster site is built by Cys-270, Cys-273, Cys-305, and Glu-312.

The protein belongs to the IspG family. It depends on [4Fe-4S] cluster as a cofactor.

It carries out the reaction (2E)-4-hydroxy-3-methylbut-2-enyl diphosphate + oxidized [flavodoxin] + H2O + 2 H(+) = 2-C-methyl-D-erythritol 2,4-cyclic diphosphate + reduced [flavodoxin]. Its pathway is isoprenoid biosynthesis; isopentenyl diphosphate biosynthesis via DXP pathway; isopentenyl diphosphate from 1-deoxy-D-xylulose 5-phosphate: step 5/6. In terms of biological role, converts 2C-methyl-D-erythritol 2,4-cyclodiphosphate (ME-2,4cPP) into 1-hydroxy-2-methyl-2-(E)-butenyl 4-diphosphate. This chain is 4-hydroxy-3-methylbut-2-en-1-yl diphosphate synthase (flavodoxin), found in Pseudomonas fluorescens (strain SBW25).